Reading from the N-terminus, the 311-residue chain is Cell division protein ZipA (311 aa).

Topologically, residues 1-5 (MQELR) are periplasmic. A helical transmembrane segment spans residues 6 to 26 (FVLIVVGALAIMALLFHGLWT). At 27-311 (SKKEGKAKFG…QIVEFKAANA (285 aa)) the chain is on the cytoplasmic side. The segment covering 32-54 (KAKFGDKPLSKLDLGESEPKESE) has biased composition (basic and acidic residues). Residues 32 to 60 (KAKFGDKPLSKLDLGESEPKESEMYVAPE) are disordered.

Belongs to the ZipA family. As to quaternary structure, interacts with FtsZ via their C-terminal domains.

The protein localises to the cell inner membrane. Functionally, essential cell division protein that stabilizes the FtsZ protofilaments by cross-linking them and that serves as a cytoplasmic membrane anchor for the Z ring. Also required for the recruitment to the septal ring of downstream cell division proteins. The sequence is that of Cell division protein ZipA from Vibrio vulnificus (strain CMCP6).